A 66-amino-acid chain; its full sequence is Large ribosomal subunit protein bL35 (66 aa).

It belongs to the bacterial ribosomal protein bL35 family.

The polypeptide is Large ribosomal subunit protein bL35 (Beijerinckia indica subsp. indica (strain ATCC 9039 / DSM 1715 / NCIMB 8712)).